The sequence spans 120 residues: Large ribosomal subunit protein uL18 (120 aa).

This sequence belongs to the universal ribosomal protein uL18 family. Part of the 50S ribosomal subunit; part of the 5S rRNA/L5/L18/L25 subcomplex. Contacts the 5S and 23S rRNAs.

In terms of biological role, this is one of the proteins that bind and probably mediate the attachment of the 5S RNA into the large ribosomal subunit, where it forms part of the central protuberance. This is Large ribosomal subunit protein uL18 from Geobacillus sp. (strain WCH70).